The chain runs to 176 residues: Transcriptional repressor NrdR (176 aa).

Residues 3 to 34 fold into a zinc finger; the sequence is CPFCQHTDSRVLESRSAEAGQSVRRRRECLQC. Residues 49 to 139 enclose the ATP-cone domain; sequence ITVIKRNQDR…VYRQFRGIRD (91 aa). The tract at residues 151 to 176 is disordered; that stretch reads GDGPLPSVLDEPYEDTAQPTIMISPQ. The span at 167 to 176 shows a compositional bias: polar residues; that stretch reads AQPTIMISPQ.

Belongs to the NrdR family. It depends on Zn(2+) as a cofactor.

Functionally, negatively regulates transcription of bacterial ribonucleotide reductase nrd genes and operons by binding to NrdR-boxes. This Acaryochloris marina (strain MBIC 11017) protein is Transcriptional repressor NrdR.